The chain runs to 132 residues: Small ribosomal subunit protein uS8 (132 aa).

The protein belongs to the universal ribosomal protein uS8 family. As to quaternary structure, part of the 30S ribosomal subunit. Contacts proteins S5 and S12.

Functionally, one of the primary rRNA binding proteins, it binds directly to 16S rRNA central domain where it helps coordinate assembly of the platform of the 30S subunit. This chain is Small ribosomal subunit protein uS8, found in Aliarcobacter butzleri (strain RM4018) (Arcobacter butzleri).